We begin with the raw amino-acid sequence, 250 residues long: UPF0259 membrane protein bbp_256 (250 aa).

The next 6 helical transmembrane spans lie at 21–41 (PIIV…DSII), 86–106 (FSLL…IQMT), 125–145 (FFKL…GFLL), 146–166 (YFIP…ILLI), 188–208 (IIVP…LIIS), and 216–236 (FLAY…LIIY).

The protein belongs to the UPF0259 family.

The protein resides in the cell membrane. In Buchnera aphidicola subsp. Baizongia pistaciae (strain Bp), this protein is UPF0259 membrane protein bbp_256.